The sequence spans 252 residues: Isoprenyl transferase (252 aa).

Residue D32 is part of the active site. D32 contacts Mg(2+). Substrate-binding positions include 33–36, W37, R45, H49, and 77–79; these read GNGR and STE. The active-site Proton acceptor is N80. Substrate-binding positions include W81, R83, R200, and 206–208; that span reads RLS. E219 provides a ligand contact to Mg(2+).

It belongs to the UPP synthase family. In terms of assembly, homodimer. The cofactor is Mg(2+).

Its function is as follows. Catalyzes the condensation of isopentenyl diphosphate (IPP) with allylic pyrophosphates generating different type of terpenoids. In Oceanobacillus iheyensis (strain DSM 14371 / CIP 107618 / JCM 11309 / KCTC 3954 / HTE831), this protein is Isoprenyl transferase.